The primary structure comprises 490 residues: Betaine aldehyde dehydrogenase (490 aa).

K(+) contacts are provided by I27 and D93. 150-152 (GAW) contacts NAD(+). The active-site Charge relay system is the K162. NAD(+) is bound at residue 176–179 (KPSE). K(+) is bound at residue V180. 230-233 (GTTT) contributes to the NAD(+) binding site. L246 lines the K(+) pocket. The active-site Proton acceptor is the E252. Residues G254, C286, and E387 each coordinate NAD(+). The Nucleophile role is filled by C286. Position 286 is a cysteine sulfenic acid (-SOH) (C286). 2 residues coordinate K(+): K457 and G460. E464 acts as the Charge relay system in catalysis.

Belongs to the aldehyde dehydrogenase family. In terms of assembly, dimer of dimers. It depends on K(+) as a cofactor.

The catalysed reaction is betaine aldehyde + NAD(+) + H2O = glycine betaine + NADH + 2 H(+). It functions in the pathway amine and polyamine biosynthesis; betaine biosynthesis via choline pathway; betaine from betaine aldehyde: step 1/1. Its function is as follows. Involved in the biosynthesis of the osmoprotectant glycine betaine. Catalyzes the irreversible oxidation of betaine aldehyde to the corresponding acid. The chain is Betaine aldehyde dehydrogenase from Pseudomonas putida (strain W619).